A 911-amino-acid polypeptide reads, in one-letter code: MEELQDDYEDMMEENLEQEEYEDPDIPESQMEEPAAHDTEATATDYHTTSHPGTHKVYVELQELVMDEKNQELRWMEAARWVQLEENLGENGAWGRPHLSHLTFWSLLELRRVFTKGTVLLDLQETSLAGVANQLLDRFIFEDQIRPQDREELLRALLLKHSHAGELEALGGVKPAVLTRSGDPSQPLLPQHSSLETQLFCEQGDGGTEGHSPSGILEKIPPDSEATLVLVGRADFLEQPVLGFVRLQEAAELEAVELPVPIRFLFVLLGPEAPHIDYTQLGRAAATLMSERVFRIDAYMAQSRGELLHSLEGFLDCSLVLPPTDAPSEQALLSLVPVQRELLRRRYQSSPAKPDSSFYKGLDLNGGPDDPLQQTGQLFGGLVRDIRRRYPYYLSDITDAFSPQVLAAVIFIYFAALSPAITFGGLLGEKTRNQMGVSELLISTAVQGILFALLGAQPLLVVGFSGPLLVFEEAFFSFCETNGLEYIVGRVWIGFWLILLVVLVVAFEGSFLVRFISRYTQEIFSFLISLIFIYETFSKLIKIFQDHPLQKTYNYNVLMVPKPQGPLPNTALLSLVLMAGTFFFAMMLRKFKNSSYFPGKLRRVIGDFGVPISILIMVLVDFFIQDTYTQKLSVPDGFKVSNSSARGWVIHPLGLRSEFPIWMMFASALPALLVFILIFLESQITTLIVSKPERKMVKGSGFHLDLLLVVGMGGVAALFGMPWLSATTVRSVTHANALTVMGKASTPGAAAQIQEVKEQRISGLLVAVLVGLSILMEPILSRIPLAVLFGIFLYMGVTSLSGIQLFDRILLLFKPPKYHPDVPYVKRVKTWRMHLFTGIQIICLAVLWVVKSTPASLALPFVLILTVPLRRVLLPLIFRNVELQCLDADDAKATFDEEEGRDEYDEVAMPV.

Methionine 1 bears the N-acetylmethionine mark. A compositionally biased stretch (acidic residues) spans 1–26 (MEELQDDYEDMMEENLEQEEYEDPDI). The interval 1–40 (MEELQDDYEDMMEENLEQEEYEDPDIPESQMEEPAAHDTE) is disordered. Over 1-403 (MEELQDDYED…LSDITDAFSP (403 aa)) the chain is Cytoplasmic. A phosphotyrosine mark is found at tyrosine 8, tyrosine 21, and tyrosine 46. The tract at residues 13-31 (EENLEQEEYEDPDIPESQM) is (Microbial infection) Interaction with P.falciparum (isolate K1) FBPA. The segment at 55–290 (HKVYVELQEL…LGRAAATLMS (236 aa)) is globular. The segment at 176-185 (AVLTRSGDPS) is interaction with ANK1. Phosphoserine occurs at positions 185 and 350. A dimerization arm region spans residues 304–357 (RGELLHSLEGFLDCSLVLPPTDAPSEQALLSLVPVQRELLRRRYQSSPAKPDSS). Tyrosine 359 is modified (phosphotyrosine). The helical transmembrane segment at 404–427 (QVLAAVIFIYFAALSPAITFGGLL) threads the bilayer. The Extracellular portion of the chain corresponds to 428 to 435 (GEKTRNQM). Residues 436 to 456 (GVSELLISTAVQGILFALLGA) traverse the membrane as a helical segment. The Cytoplasmic segment spans residues 457–459 (QPL). Residues 460–476 (LVVGFSGPLLVFEEAFF) form a discontinuously helical membrane-spanning segment. Topologically, residues 477 to 485 (SFCETNGLE) are extracellular. Residues 486–506 (YIVGRVWIGFWLILLVVLVVA) form a helical membrane-spanning segment. Residues 507–518 (FEGSFLVRFISR) lie on the Cytoplasmic side of the membrane. A helical transmembrane segment spans residues 519-541 (YTQEIFSFLISLIFIYETFSKLI). The Extracellular segment spans residues 542-570 (KIFQDHPLQKTYNYNVLMVPKPQGPLPNT). Residues 559 to 630 (MVPKPQGPLP…DFFIQDTYTQ (72 aa)) are involved in anion transport. The helical transmembrane segment at 571 to 591 (ALLSLVLMAGTFFFAMMLRKF) threads the bilayer. Topologically, residues 592-602 (KNSSYFPGKLR) are cytoplasmic. The helical transmembrane segment at 603-623 (RVIGDFGVPISILIMVLVDFF) threads the bilayer. Residues 624-663 (IQDTYTQKLSVPDGFKVSNSSARGWVIHPLGLRSEFPIWM) lie on the Extracellular side of the membrane. An N-linked (GlcNAc...) (complex) asparagine glycan is attached at asparagine 642. A helical membrane pass occupies residues 664 to 684 (MFASALPALLVFILIFLESQI). At 685–700 (TTLIVSKPERKMVKGS) the chain is on the cytoplasmic side. Residues 701–719 (GFHLDLLLVVGMGGVAALF) form a helical membrane-spanning segment. A discontinuously helical transmembrane segment spans residues 720 to 737 (GMPWLSATTVRSVTHANA). The interval 720–761 (GMPWLSATTVRSVTHANALTVMGKASTPGAAAQIQEVKEQRI) is (Microbial infection) 5ABC region; interaction with P.falciparum (isolate 3D7) MSP9. Over 738-760 (LTVMGKASTPGAAAQIQEVKEQR) the chain is Cytoplasmic. The next 2 helical transmembrane spans lie at 761–781 (ISGL…PILS) and 782–800 (RIPL…VTSL). The Cytoplasmic portion of the chain corresponds to 801–838 (SGIQLFDRILLLFKPPKYHPDVPYVKRVKTWRMHLFTG). Positions 839–869 (IQIICLAVLWVVKSTPASLALPFVLILTVPL) form an intramembrane region, discontinuously helical. Cysteine 843 carries S-palmitoyl cysteine lipidation. Over 870–911 (RRVLLPLIFRNVELQCLDADDAKATFDEEEGRDEYDEVAMPV) the chain is Cytoplasmic. Tyrosine 904 bears the Phosphotyrosine mark.

Belongs to the anion exchanger (TC 2.A.31) family. A dimer in solution, but in its membrane environment, it exists primarily as a mixture of dimers and tetramers and spans the membrane asymmetrically. Component of the ankyrin-1 complex in the erythrocyte, composed of ANK1, RHCE, RHAG, SLC4A1, EPB42, GYPA, GYPB and AQP1. Interacts with STOM; this interaction positively regulates SLC4A1 activity. Interacts with GYPA; a GYPA monomer is bound at each end of the SLC4A1 dimer forming a heterotetramer. Three SLC4A1 dimers (Band 3-I, Band 3-II and Band 3-III) participates in the ankyrin-1 complex. Interacts (via the cytoplasmic domain) with EPB42; this interaction is mediated by the SLC4A1 Band 3-I dimer. Interacts (via the cytoplasmic domain) directly with ANK1; this interaction is mediated by the SLC4A1 Band 3-II and Band 3-III dimers. In terms of assembly, interacts with TMEM139. As to quaternary structure, (Microbial infection) Interacts (via N-terminus) with P.falciparum (isolate K1) aldolase FBPA; the interaction inhibits FBPA catalytic activity. (Microbial infection) Interacts (via the 5ABC region) with P.falciparum (isolate 3D7) MSP9/ABRA (via N-terminus). In terms of assembly, (Microbial infection) Interacts (via the 5ABC region) with P.falciparum (isolate 3D7) MSP1 p42 subunit. Phosphorylated on Tyr-8 and Tyr-21 most likely by SYK. PP1-resistant phosphorylation that precedes Tyr-359 and Tyr-904 phosphorylation. In terms of processing, phosphorylated on Tyr-359 and Tyr-904 most likely by LYN. PP1-inhibited phosphorylation that follows Tyr-8 and Tyr-21 phosphorylation. Post-translationally, N-glycosylated. Detected in erythrocytes (at protein level). As to expression, expressed in kidney (at protein level).

Its subcellular location is the cell membrane. It is found in the basolateral cell membrane. It carries out the reaction hydrogencarbonate(in) + chloride(out) = hydrogencarbonate(out) + chloride(in). With respect to regulation, phenyl isothiocyanate inhibits anion transport in vitro. Functionally, functions both as a transporter that mediates electroneutral anion exchange across the cell membrane and as a structural protein. Component of the ankyrin-1 complex of the erythrocyte membrane; required for normal flexibility and stability of the erythrocyte membrane and for normal erythrocyte shape via the interactions of its cytoplasmic domain with cytoskeletal proteins, glycolytic enzymes, and hemoglobin. Functions as a transporter that mediates the 1:1 exchange of inorganic anions across the erythrocyte membrane. Mediates chloride-bicarbonate exchange in the kidney, and is required for normal acidification of the urine. Its function is as follows. (Microbial infection) Acts as a receptor for P.falciparum (isolate 3D7) MSP9 and thus, facilitates merozoite invasion of erythrocytes. Acts as a receptor for P.falciparum (isolate 3D7) MSP1 and thus, facilitates merozoite invasion of erythrocytes. In Homo sapiens (Human), this protein is Band 3 anion transport protein.